Consider the following 222-residue polypeptide: N-acetyltransferase 8B (222 aa).

Residues 1-42 (MVSYHICEYQDSDYKSVVDVFTKGAEEYIPSTFRHLLLLPRT) are Cytoplasmic-facing. The helical; Signal-anchor for type II membrane protein transmembrane segment at 43–67 (LLLLLGVSLALVLVSGSWLLAVVCI) threads the bilayer. The region spanning 62 to 217 (LAVVCIFFLL…VGIRFVQLNY (156 aa)) is the N-acetyltransferase domain. The Lumenal segment spans residues 68–222 (FFLLPFLWFL…VQLNYSFPSA (155 aa)). Lys99 is subject to N6-acetyllysine.

It belongs to the NAT8 family. In terms of processing, acetylation on Lys-99 modulates enzymatic activity.

Its subcellular location is the endoplasmic reticulum-Golgi intermediate compartment membrane. It localises to the endoplasmic reticulum membrane. It carries out the reaction L-lysyl-[protein] + acetyl-CoA = N(6)-acetyl-L-lysyl-[protein] + CoA + H(+). In terms of biological role, endoplasmic reticulum (ER)-membrane-bound lysine N-acetyltransferase catalyzing the N6-acetylation of lysine residues in the lumen of the ER in various proteins, including PROM1 and BACE1, using acetyl-CoA as acetyl donor. Thereby, may regulate apoptosis through the acetylation and the regulation of the expression of PROM1. Acetylates and stabilizes BACE1 immature protein, leading to increased steady-state levels in neurons. By acting on BACE1 expression, may regulate amyloid beta-peptide formation. N(6)-lysine acetylation in ER maintains protein homeostasis and regulates reticulophagy. The protein is N-acetyltransferase 8B of Rattus norvegicus (Rat).